The sequence spans 365 residues: Galactoside alpha-(1,2)-fucosyltransferase 1 (365 aa).

The Cytoplasmic portion of the chain corresponds to methionine 1 to histidine 8. A helical; Signal-anchor for type II membrane protein transmembrane segment spans residues leucine 9–phenylalanine 25. The Lumenal segment spans residues leucine 26 to proline 365. N-linked (GlcNAc...) asparagine glycans are attached at residues asparagine 65, asparagine 301, and asparagine 327.

It belongs to the glycosyltransferase 11 family.

It localises to the golgi apparatus. The protein resides in the golgi stack membrane. It catalyses the reaction a beta-D-galactosyl-(1-&gt;4)-N-acetyl-beta-D-glucosaminyl derivative + GDP-beta-L-fucose = an alpha-L-Fuc-(1-&gt;2)-beta-D-Gal-(1-&gt;4)-beta-D-GlcNAc derivative + GDP + H(+). The catalysed reaction is a ganglioside GA1 + GDP-beta-L-fucose = a ganglioside Fuc-GA1 + GDP + H(+). It carries out the reaction a beta-D-Gal-(1-&gt;3)-beta-D-GlcNAc-(1-&gt;3)-beta-D-Gal-(1-&gt;4)-beta-D-Glc-(1&lt;-&gt;1')-Cer(d18:1(4E)) + GDP-beta-L-fucose = alpha-L-fucosyl-(1-&gt;2)- beta-D-galactosyl-(1-&gt;3)-N-acetyl-beta-D-glucosaminyl-(1-&gt;3)-beta-D-galactosyl-(1-&gt;4)-beta-D-glucosyl-(1&lt;-&gt;1')-N-acylsphing-4-enine + GDP + H(+). The enzyme catalyses a neolactoside nLc4Cer(d18:1(4E)) + GDP-beta-L-fucose = a neolactoside IV(2)-alpha-Fuc-nLc4Cer(d18:1(4E)) + GDP + H(+). It catalyses the reaction a ganglioside GM1 + GDP-beta-L-fucose = a ganglioside Fuc-GM1 + GDP + H(+). The catalysed reaction is beta-D-galactosyl-(1-&gt;3)-N-acetyl-D-galactosamine + GDP-beta-L-fucose = alpha-L-fucosyl-(1-&gt;2)-beta-D-galactosyl-(1-&gt;3)-N-acetyl-D-galactosamine + GDP + H(+). The protein operates within protein modification; protein glycosylation. Functionally, catalyzes the transfer of L-fucose, from a guanosine diphosphate-beta-L-fucose, to the terminal galactose residue of glycoconjugates through an alpha(1,2) linkage leading to H antigen synthesis that is an intermediate substrate in the synthesis of ABO blood group antigens. H antigen is essential for maturation of the glomerular layer of the main olfactory bulb, in cell migration and early cell-cell contacts during tumor associated angiogenesis. Preferentially fucosylates soluble lactose and to a lesser extent fucosylates glycolipids gangliosides GA1 and GM1a. The sequence is that of Galactoside alpha-(1,2)-fucosyltransferase 1 from Leontopithecus chrysomelas (Golden-headed lion tamarin).